Here is a 194-residue protein sequence, read N- to C-terminus: Crossover junction endodeoxyribonuclease RuvC (194 aa).

Residues Asp-8, Glu-72, and Asp-144 contribute to the active site. Residues Asp-8, Glu-72, and Asp-144 each contribute to the Mg(2+) site.

It belongs to the RuvC family. As to quaternary structure, homodimer which binds Holliday junction (HJ) DNA. The HJ becomes 2-fold symmetrical on binding to RuvC with unstacked arms; it has a different conformation from HJ DNA in complex with RuvA. In the full resolvosome a probable DNA-RuvA(4)-RuvB(12)-RuvC(2) complex forms which resolves the HJ. Requires Mg(2+) as cofactor.

Its subcellular location is the cytoplasm. It carries out the reaction Endonucleolytic cleavage at a junction such as a reciprocal single-stranded crossover between two homologous DNA duplexes (Holliday junction).. Its function is as follows. The RuvA-RuvB-RuvC complex processes Holliday junction (HJ) DNA during genetic recombination and DNA repair. Endonuclease that resolves HJ intermediates. Cleaves cruciform DNA by making single-stranded nicks across the HJ at symmetrical positions within the homologous arms, yielding a 5'-phosphate and a 3'-hydroxyl group; requires a central core of homology in the junction. The consensus cleavage sequence is 5'-(A/T)TT(C/G)-3'. Cleavage occurs on the 3'-side of the TT dinucleotide at the point of strand exchange. HJ branch migration catalyzed by RuvA-RuvB allows RuvC to scan DNA until it finds its consensus sequence, where it cleaves and resolves the cruciform DNA. This is Crossover junction endodeoxyribonuclease RuvC from Psychrobacter arcticus (strain DSM 17307 / VKM B-2377 / 273-4).